Here is a 288-residue protein sequence, read N- to C-terminus: Methyltransferase ucsB (288 aa).

S-adenosyl-L-methionine contacts are provided by residues D87 and 121–122; that span reads DA.

This sequence belongs to the class I-like SAM-binding methyltransferase superfamily.

Its pathway is mycotoxin biosynthesis. In terms of biological role, methyltransferase; part of the gene cluster that mediates the biosynthesis of UCS1025A, a member of the pyrrolizidinone family that acts as a strong telomerase inhibitor and displays potent antibacterial and antitumor properties. These compounds share a hemiaminal-containing pyrrolizidinone core fused with a gamma-lactone, giving a furopyrrolizidine that is connected to a decalin fragment. The polyketide synthase module (PKS) of the PKS-NRPS ucsA is responsible for the synthesis of the polyketide backbone via the condensation of an acetyl-CoA starter unit with 6 malonyl-CoA units. The downstream nonribosomal peptide synthetase (NRPS) module then amidates the carboxyl end of the polyketide with a 2S,3S-methylproline derived from L-isoleucine by the 2-oxoglutarate-dependent dioxygenase ucsF which converts L-isoleucine to (4S,5S)-4-methylpyrroline-5-carboxylate that is further converted to 2S,3S-methylproline by the pyrroline-5-carboxylate reductase ucsG. Reductive release of the completed aminoacyl polyketide from the assembly line can form the 3-pyrrolin-2-one structure via an intramolecular Knoevenagel reaction. Because ucsA lacks a designated enoylreductase (ER) domain, the required activity is provided the enoyl reductase ucsL. This keto acyclic precursor is the substrate of the Diels-Alderase ucsH, that catalyzes the Diels-Alder cycloaddition. Oxidation of the 3S-methyl group to a carboxylate by the cytochrome P450 monooxygenase ucsK allows an oxa-Michael cyclization that might involve the reductase/dehydrogenase ucsI and which furnishes the furopyrrolizidine. The oxidase ucsJ likely plays a critical role in stereoselective reduction of the C5-C6 double bond to afford the required R-configured carboxylate group. Further enolization and oxidation at C5 by an unidentified enzyme affords the last intermediate that can undergo oxa-Michael cyclization to yield UCS1025A. The chain is Methyltransferase ucsB from Acremonium sp.